A 1067-amino-acid chain; its full sequence is Myocardin-related transcription factor B (1067 aa).

RPEL repeat units lie at residues Glu46–Lys71, Asn90–Leu115, and Asp134–Leu159. Disordered stretches follow at residues Asn175–Ile223 and Pro249–Lys286. Composition is skewed to polar residues over residues Gln193–Ala203 and Ser212–Ile223. A compositionally biased stretch (basic and acidic residues) spans Lys268–Pro283. The region spanning Leu390–Gln424 is the SAP domain. Residues Gly540–Gln594 adopt a coiled-coil conformation. The span at Ile799–Thr819 shows a compositional bias: polar residues. Residues Ile799 to Pro829 are disordered.

Interacts with SRF.

The protein localises to the nucleus. In terms of biological role, poor transcriptional factor which uses the canonical single or multiple CArG boxes DNA sequence. Acts as a cofactor of serum response factor (SRF) with the potential to modulate SRF target genes. The sequence is that of Myocardin-related transcription factor B (mrtfb) from Xenopus laevis (African clawed frog).